Reading from the N-terminus, the 466-residue chain is Alpha-1A adrenergic receptor (466 aa).

At 1–25 the chain is on the extracellular side; it reads MVFLSGNASDSSNCTQPPAPVNIPK. N-linked (GlcNAc...) asparagine glycans are attached at residues asparagine 7 and asparagine 13. The chain crosses the membrane as a helical span at residues 26–51; the sequence is AILLGVILGVLILFGVPGNILVILSV. Topologically, residues 52–63 are cytoplasmic; that stretch reads ACHRHLHSVTHY. The chain crosses the membrane as a helical span at residues 64–89; that stretch reads YIVNLAVADLLLTSTVLPFSAIFEIL. Residues 90-99 are Extracellular-facing; the sequence is GYWAFGRVFC. The chain crosses the membrane as a helical span at residues 100 to 122; sequence NIWAAVDVLCCTASIMSLCIISI. At 123 to 143 the chain is on the cytoplasmic side; that stretch reads DRYIGVSYPLRYPTIVTQRRG. Residues 144–168 traverse the membrane as a helical segment; sequence LRALLCLWALSLVISIGPLFGWRQP. The Extracellular portion of the chain corresponds to 169 to 181; it reads APQDETICQINED. A helical membrane pass occupies residues 182–205; sequence PSYVLFSALGSFYVPLAIILVMYC. Residues 206–272 are Cytoplasmic-facing; it reads RVYVVAKRES…KFSREKKAAK (67 aa). The chain crosses the membrane as a helical span at residues 273–297; the sequence is TLGIVVGCFVLCWLPFFLVMPIGSF. Over 298–304 the chain is Extracellular; the sequence is FPDFKPS. The chain crosses the membrane as a helical span at residues 305-329; that stretch reads ETVFKIVFWLGYLNSCINPIIYPCS. Over 330–466 the chain is Cytoplasmic; the sequence is SQEFKKAFQN…ISLSENGEEV (137 aa). Residues 334–349 carry the Nuclear localization signal motif; that stretch reads KKAFQNVLKIQCLRRK. The S-palmitoyl cysteine moiety is linked to residue cysteine 345.

The protein belongs to the G-protein coupled receptor 1 family. Adrenergic receptor subfamily. ADRA1A sub-subfamily. In terms of assembly, homo- and heterooligomer. Heterooligomerizes with ADRA1B homooligomers in cardiac myocytes. Interacts with CAVIN4.

The protein localises to the nucleus membrane. Its subcellular location is the cell membrane. It localises to the cytoplasm. It is found in the membrane. The protein resides in the caveola. Functionally, this alpha-adrenergic receptor mediates its action by association with G proteins that activate a phosphatidylinositol-calcium second messenger system. Its effect is mediated by G(q) and G(11) proteins. Nuclear ADRA1A-ADRA1B heterooligomers regulate phenylephrine (PE)-stimulated ERK signaling in cardiac myocytes. In Cavia porcellus (Guinea pig), this protein is Alpha-1A adrenergic receptor (ADRA1A).